The chain runs to 804 residues: Lon protease 2 (804 aa).

The region spanning 19 to 216 (VPILPLRNSV…LVLAMVGRQL (198 aa)) is the Lon N-terminal domain. 367-374 (GPPGVGKT) contributes to the ATP binding site. The region spanning 603 to 784 (TLQPGVATGL…EEILPLVLEP (182 aa)) is the Lon proteolytic domain. Catalysis depends on residues Ser690 and Lys733. A disordered region spans residues 782-804 (LEPPRRAPAQSASPEELEEQAGV).

The protein belongs to the peptidase S16 family. As to quaternary structure, homohexamer. Organized in a ring with a central cavity.

Its subcellular location is the cytoplasm. It carries out the reaction Hydrolysis of proteins in presence of ATP.. Its function is as follows. ATP-dependent serine protease that mediates the selective degradation of mutant and abnormal proteins as well as certain short-lived regulatory proteins. Required for cellular homeostasis and for survival from DNA damage and developmental changes induced by stress. Degrades polypeptides processively to yield small peptide fragments that are 5 to 10 amino acids long. Binds to DNA in a double-stranded, site-specific manner. In Sorangium cellulosum (strain So ce56) (Polyangium cellulosum (strain So ce56)), this protein is Lon protease 2.